The sequence spans 51 residues: Large ribosomal subunit protein bL33 (51 aa).

Belongs to the bacterial ribosomal protein bL33 family.

The polypeptide is Large ribosomal subunit protein bL33 (Acinetobacter baylyi (strain ATCC 33305 / BD413 / ADP1)).